The following is a 386-amino-acid chain: Magnesium transporter MRS2-7 (386 aa).

Transmembrane regions (helical) follow at residues 321 to 341 (LMLS…GIFG) and 355 to 375 (IFKW…VIIL). The Required for magnesium transport activity motif lies at 341–343 (GMN).

The protein belongs to the CorA metal ion transporter (MIT) (TC 1.A.35.5) family. In terms of tissue distribution, isoform 1 is expressed in the whole plant. Isoform 4 is expressed only in roots and flowers.

It is found in the endoplasmic reticulum membrane. In terms of biological role, low-affinity magnesium transporter that mediates the influx of magnesium. The sequence is that of Magnesium transporter MRS2-7 (MRS2-7) from Arabidopsis thaliana (Mouse-ear cress).